The chain runs to 207 residues: Outer-membrane lipoprotein carrier protein (207 aa).

A signal peptide spans 1 to 21 (MRLFRVLLLSAVAFALSPAQA).

This sequence belongs to the LolA family. As to quaternary structure, monomer.

It is found in the periplasm. In terms of biological role, participates in the translocation of lipoproteins from the inner membrane to the outer membrane. Only forms a complex with a lipoprotein if the residue after the N-terminal Cys is not an aspartate (The Asp acts as a targeting signal to indicate that the lipoprotein should stay in the inner membrane). This chain is Outer-membrane lipoprotein carrier protein, found in Azotobacter vinelandii (strain DJ / ATCC BAA-1303).